A 913-amino-acid polypeptide reads, in one-letter code: MSRFFTTGSDSESESSLSGEELVTKPVGGNYGKQPLLLSEDEEDTKRVVRSAKDKRFEELTNLIRTIRNAMKIRDVTKCLEEFELLGKAYGKAKSIVDKEGVPRFYIRILADLEDYLNELWEDKEGKKKMNKNNAKALSTLRQKIRKYNRDFESHITSYKQNPEQSADEDAEKNEEDSEGSSDEDEDEDGVSAATFLKKKSEAPSGESRKFLKKMDDEDEDSEDSEDDEDWDTGSTSSDSDSEEEEGKQTALASRFLKKAPTTDEDKKAAEKKREDKAKKKHDRKSKRLDEEEEDNEGGEWERVRGGVPLVKEKPKMFAKGTEITHAVVIKKLNEILQARGKKGTDRAAQIELLQLLVQIAAENNLGEGVIVKIKFNIIASLYDYNPNLATYMKPEMWGKCLDCINELMDILFANPNIFVGENILEESENLHNADQPLRVRGCILTLVERMDEEFTKIMQNTDPHSQEYVEHLKDEAQVCAIIERVQRYLEEKGTTEEVCRIYLLRILHTYYKFDYKAHQRQLTPPEGSSKSEQDQAENEGEDSAVLMERLCKYIYAKDRTDRIRTCAILCHIYHHALHSRWYQARDLMLMSHLQDNIQHADPPVQILYNRTMVQLGICAFRQGLTMDAHNALLDIQSSGRAKELLGQGLLLRSLQERNQEQEKVERRRQVPFHLHINLELLECVYLVSAMLLEIPYMAAHESDARRRMISKQFHHQLRVGERQPLLGPPESMREHVVAASKAMKMGDWKTCHSFIINEKMNGKVWDLFPEADKVRTMLVRKIQEESLRTYLFTYSSVYDSISMETLSDMFELDLPTVHSIISKMIINEELMASLDQPTQTVVMHRTEPTAQQNLALQLAEKLGSLVENNERVFDHKQGTYGGYFRDQKDGYRKNEGYMRRGGYRQQQSQTAY.

The tract at residues 1–44 is disordered; it reads MSRFFTTGSDSESESSLSGEELVTKPVGGNYGKQPLLLSEDEED. Residues 8 to 21 show a composition bias toward low complexity; sequence GSDSESESSLSGEE. Ser9, Ser11, Ser13, Ser15, Ser16, Ser18, and Ser39 each carry phosphoserine. Lys99 bears the N6-acetyllysine mark. 2 disordered regions span residues 157 to 301 and 522 to 542; these read TSYK…GGEW and QLTPPEGSSKSEQDQAENEGE. A phosphoserine mark is found at Ser166, Ser178, Ser181, and Ser182. The segment covering 166–190 has biased composition (acidic residues); that stretch reads SADEDAEKNEEDSEGSSDEDEDEDG. The span at 199-216 shows a compositional bias: basic and acidic residues; the sequence is KKSEAPSGESRKFLKKMD. A compositionally biased stretch (acidic residues) spans 217 to 232; the sequence is DEDEDSEDSEDDEDWD. A compositionally biased stretch (basic and acidic residues) spans 261–278; sequence PTTDEDKKAAEKKREDKA. Residues 522 to 531 show a composition bias toward polar residues; it reads QLTPPEGSSK. Thr524 is modified (phosphothreonine). Lys643 carries the post-translational modification N6-acetyllysine. In terms of domain architecture, PCI spans 673–849; it reads FHLHINLELL…QTVVMHRTEP (177 aa). Positions 885-913 are disordered; the sequence is FRDQKDGYRKNEGYMRRGGYRQQQSQTAY. Residues 886-899 are compositionally biased toward basic and acidic residues; sequence RDQKDGYRKNEGYM. Residue Ser909 is modified to Phosphoserine.

It belongs to the eIF-3 subunit C family. As to quaternary structure, component of the eukaryotic translation initiation factor 3 (eIF-3) complex, which is composed of 13 subunits: EIF3A, EIF3B, EIF3C, EIF3D, EIF3E, EIF3F, EIF3G, EIF3H, EIF3I, EIF3J, EIF3K, EIF3L and EIF3M. The eIF-3 complex appears to include 3 stable modules: module A is composed of EIF3A, EIF3B, EIF3G and EIF3I; module B is composed of EIF3F, EIF3H, and EIF3M; and module C is composed of EIF3C, EIF3D, EIF3E, EIF3K and EIF3L. EIF3C of module C binds EIF3B of module A and EIF3H of module B, thereby linking the three modules. EIF3J is a labile subunit that binds to the eIF-3 complex via EIF3B. The eIF-3 complex interacts with RPS6KB1 under conditions of nutrient depletion. Mitogenic stimulation leads to binding and activation of a complex composed of MTOR and RPTOR, leading to phosphorylation and release of RPS6KB1 and binding of EIF4B to eIF-3. Interacts with ALKBH4, IFIT1 and IFIT2. Interacts with BZW2/5MP1. Phosphorylated. Phosphorylation is enhanced upon serum stimulation.

It localises to the cytoplasm. In terms of biological role, component of the eukaryotic translation initiation factor 3 (eIF-3) complex, which is required for several steps in the initiation of protein synthesis. The eIF-3 complex associates with the 40S ribosome and facilitates the recruitment of eIF-1, eIF-1A, eIF-2:GTP:methionyl-tRNAi and eIF-5 to form the 43S pre-initiation complex (43S PIC). The eIF-3 complex stimulates mRNA recruitment to the 43S PIC and scanning of the mRNA for AUG recognition. The eIF-3 complex is also required for disassembly and recycling of post-termination ribosomal complexes and subsequently prevents premature joining of the 40S and 60S ribosomal subunits prior to initiation. The eIF-3 complex specifically targets and initiates translation of a subset of mRNAs involved in cell proliferation, including cell cycling, differentiation and apoptosis, and uses different modes of RNA stem-loop binding to exert either translational activation or repression. The polypeptide is Eukaryotic translation initiation factor 3 subunit C (Pongo abelii (Sumatran orangutan)).